A 358-amino-acid polypeptide reads, in one-letter code: Uptake hydrogenase small subunit (358 aa).

A signal peptide (tat-type signal) is located at residues 1–45; sequence MSRLETFYDVMRRQGITRRSFLKYCSLTAAALGLGPAFAPRIAHA. Residues Cys62, Cys65, Cys160, Cys194, His232, Cys235, Cys260, and Cys266 each contribute to the [4Fe-4S] cluster site. [3Fe-4S] cluster is bound by residues Cys275, Cys294, and Cys297.

This sequence belongs to the [NiFe]/[NiFeSe] hydrogenase small subunit family. In terms of assembly, heterodimer of a large and a small subunit. It depends on [4Fe-4S] cluster as a cofactor. [3Fe-4S] cluster serves as cofactor. Post-translationally, predicted to be exported by the Tat system. The position of the signal peptide cleavage has been experimentally proven.

It localises to the cell membrane. It catalyses the reaction H2 + A = AH2. Functionally, this enzyme recycles the H(2) produced by nitrogenase to increase the production of ATP and to protect nitrogenase against inhibition or damage by O(2) under carbon- or phosphate-limited conditions. This chain is Uptake hydrogenase small subunit (hoxK), found in Azotobacter vinelandii.